A 257-amino-acid chain; its full sequence is Adenosylcobinamide-GDP ribazoletransferase (257 aa).

Helical transmembrane passes span isoleucine 30–isoleucine 50, methionine 52–threonine 72, serine 109–serine 129, serine 132–tyrosine 152, leucine 175–leucine 195, asparagine 198–phenylalanine 218, and glycine 237–phenylalanine 257.

This sequence belongs to the CobS family. Requires Mg(2+) as cofactor.

It localises to the cell membrane. It carries out the reaction alpha-ribazole + adenosylcob(III)inamide-GDP = adenosylcob(III)alamin + GMP + H(+). The catalysed reaction is alpha-ribazole 5'-phosphate + adenosylcob(III)inamide-GDP = adenosylcob(III)alamin 5'-phosphate + GMP + H(+). The protein operates within cofactor biosynthesis; adenosylcobalamin biosynthesis; adenosylcobalamin from cob(II)yrinate a,c-diamide: step 7/7. In terms of biological role, joins adenosylcobinamide-GDP and alpha-ribazole to generate adenosylcobalamin (Ado-cobalamin). Also synthesizes adenosylcobalamin 5'-phosphate from adenosylcobinamide-GDP and alpha-ribazole 5'-phosphate. This chain is Adenosylcobinamide-GDP ribazoletransferase, found in Clostridioides difficile (strain 630) (Peptoclostridium difficile).